The chain runs to 542 residues: Exopolysaccharide phosphotransferase CpsY (542 aa).

Residues 522-542 form a disordered region; it reads SPTVSAPLEDGQTANPAQTAR. Positions 533–542 are enriched in polar residues; the sequence is QTANPAQTAR.

This sequence belongs to the stealth family.

This chain is Exopolysaccharide phosphotransferase CpsY (cpsY), found in Mycobacterium leprae (strain TN).